Consider the following 1183-residue polypeptide: Peroxisomal ATPase PEX6 (1183 aa).

The disordered stretch occupies residues 161–205 (ESRGKKTGEPEDGPLANGIDLNGVDDSDSDEDVLSQGDDDDENNV). Acidic residues predominate over residues 183–204 (GVDDSDSDEDVLSQGDDDDENN). The AAA-cassette D1 stretch occupies residues 576 to 785 (LPNNYISPVH…VERAMTACSE (210 aa)). Residues 878 to 1070 (GILFYGPPGT…CSDAMLKAIT (193 aa)) form an AAA-cassette D2 region. 883 to 890 (GPPGTGKT) serves as a coordination point for ATP. The disordered stretch occupies residues 1160 to 1183 (IMVDGPGTGGEGAFGDDGDEEGLY). The span at 1173 to 1183 (FGDDGDEEGLY) shows a compositional bias: acidic residues.

This sequence belongs to the AAA ATPase family. In terms of assembly, interacts with PEX1; forming the PEX1-PEX6 AAA ATPase complex, which is composed of a heterohexamer formed by a trimer of PEX1-PEX6 dimers.

Its subcellular location is the cytoplasm. It is found in the cytosol. The protein localises to the peroxisome membrane. It carries out the reaction ATP + H2O = ADP + phosphate + H(+). Its function is as follows. Component of the PEX1-PEX6 AAA ATPase complex, a protein dislocase complex that mediates the ATP-dependent extraction of the PEX5 receptor from peroxisomal membranes, an essential step for PEX5 recycling. Specifically recognizes PEX5 monoubiquitinated at 'Cys-6', and pulls it out of the peroxisome lumen through the PEX2-PEX10-PEX12 retrotranslocation channel. Extraction by the PEX1-PEX6 AAA ATPase complex is accompanied by unfolding of the TPR repeats and release of bound cargo from PEX5. Regulates autophagy and biogenesis of peroxisomes and Woronin bodies. Plays important roles in mycelial growth and development and stress response. Is also essential for conidiation and fatty acid utilization. Required for nematode predation via trap formation. This is Peroxisomal ATPase PEX6 from Arthrobotrys oligospora (strain ATCC 24927 / CBS 115.81 / DSM 1491) (Nematode-trapping fungus).